The sequence spans 683 residues: Hexamerin 70b (683 aa).

Residues 1 to 21 (MIVIMKAGFLFLASLCLLVQA) form the signal peptide. Residues 32–153 (VTRQKNIYEL…VAVIHRPDTK (122 aa)) form the Hemocyanin N-terminal domain. The 270-residue stretch at 159 to 428 (PMYEVMPHLY…SIYKTILDYY (270 aa)) folds into the Hemocyanin middle domain. N203 carries N-linked (GlcNAc...) asparagine glycosylation. The Hemocyanin C-terminal domain maps to 437-673 (KYTTEELNFP…IHVKEVLVHH (237 aa)).

It belongs to the hemocyanin/hexamerin family. In terms of assembly, probable homohexamer. Expressed in the fat body and secreted into the hemolymph (at protein level). Present in trophocytes and oenocytes of the fat body (at protein level).

The protein localises to the secreted. It is found in the nucleus. It localises to the cytoplasm. The protein resides in the cytoplasmic granule. Functionally, storage protein that may function as a nutrient supply to compensate for lack of dietary proteins during metamorphosis and egg production. The chain is Hexamerin 70b from Apis mellifera (Honeybee).